The primary structure comprises 845 residues: ATP-binding cassette sub-family F member 1 (845 aa).

The segment at 1–261 (MPKAPKQQPP…HLSKKEKKKL (261 aa)) is disordered. Phosphoserine is present on residues Ser22 and Ser24. A compositionally biased stretch (basic residues) spans 29–39 (KKGKKDKKIKK). Residues 47 to 64 (VEDKQAGEEEKVLKEKEQ) show a composition bias toward basic and acidic residues. A compositionally biased stretch (basic residues) spans 73–85 (QKKKRDTRKGRRK). At Ser105 the chain carries Phosphoserine. At Thr108 the chain carries Phosphothreonine. A phosphoserine; by CK2 mark is found at Ser109 and Ser140. Residues 147–160 (EKHPPKPAKPEKNR) show a composition bias toward basic and acidic residues. Ser166 bears the Phosphoserine mark. Basic and acidic residues predominate over residues 206–226 (EIIKEKEPPKQGKEKAKKAEQ). Acidic residues predominate over residues 227–241 (GSEEEGEGEEEEEEG). Position 228 is a phosphoserine (Ser228). Residues 304-548 (IKLEKFSISA…MYQQKQKELL (245 aa)) enclose the ABC transporter 1 domain. 336–343 (GPNGKGKT) provides a ligand contact to ATP. Residues 559-580 (KELKAGGKSTKQAEKQTKEALT) are compositionally biased toward basic and acidic residues. The interval 559 to 602 (KELKAGGKSTKQAEKQTKEALTRKQQKCRRKNQDEESQEAPELL) is disordered. Phosphoserine is present on Ser595. The ABC transporter 2 domain maps to 625–840 (LGLHGVTFGY…VLEALGEVMV (216 aa)). 658–665 (GPNGVGKS) lines the ATP pocket.

Belongs to the ABC transporter superfamily. ABCF family. EF3 subfamily. Isoform 2 interacts (via N-terminus) with EIF2S1; the interaction is independent of its phosphorylated status. Isoform 2 associates (via both ABC transporter domains) with the ribosomes. Isoform 2 is phosphorylated at phosphoserine and phosphothreonine. Isoform 2 phosphorylation on Ser-109 and Ser-140 by CK2 inhibits association of EIF2 with ribosomes. As to expression, ubiquitous.

Its subcellular location is the cytoplasm. It localises to the nucleus. The protein localises to the nucleoplasm. It is found in the nucleus envelope. Isoform 2 is required for efficient Cap- and IRES-mediated mRNA translation initiation. Isoform 2 is not involved in the ribosome biogenesis. This chain is ATP-binding cassette sub-family F member 1 (ABCF1), found in Homo sapiens (Human).